A 122-amino-acid polypeptide reads, in one-letter code: Large ribosomal subunit protein eL22B (122 aa).

The protein belongs to the eukaryotic ribosomal protein eL22 family. In terms of assembly, component of the large ribosomal subunit (LSU). Mature yeast ribosomes consist of a small (40S) and a large (60S) subunit. The 40S small subunit contains 1 molecule of ribosomal RNA (18S rRNA) and 33 different proteins (encoded by 57 genes). The large 60S subunit contains 3 rRNA molecules (25S, 5.8S and 5S rRNA) and 46 different proteins (encoded by 81 genes).

Its subcellular location is the cytoplasm. Its function is as follows. Component of the ribosome, a large ribonucleoprotein complex responsible for the synthesis of proteins in the cell. The small ribosomal subunit (SSU) binds messenger RNAs (mRNAs) and translates the encoded message by selecting cognate aminoacyl-transfer RNA (tRNA) molecules. The large subunit (LSU) contains the ribosomal catalytic site termed the peptidyl transferase center (PTC), which catalyzes the formation of peptide bonds, thereby polymerizing the amino acids delivered by tRNAs into a polypeptide chain. The nascent polypeptides leave the ribosome through a tunnel in the LSU and interact with protein factors that function in enzymatic processing, targeting, and the membrane insertion of nascent chains at the exit of the ribosomal tunnel. This chain is Large ribosomal subunit protein eL22B, found in Saccharomyces cerevisiae (strain ATCC 204508 / S288c) (Baker's yeast).